A 78-amino-acid polypeptide reads, in one-letter code: Delta-conotoxin TxVIA (78 aa).

Residues 1-22 (MKLTCMMIVAVLFLTAWTFATA) form the signal peptide. A propeptide spanning residues 23 to 49 (DDPRNGLGNLFSNAHHEMKNPEASKLN) is cleaved from the precursor. 3 disulfides stabilise this stretch: Cys-53-Cys-68, Cys-60-Cys-72, and Cys-67-Cys-77. Met-59 carries the methionine sulfoxide; partial modification.

It belongs to the conotoxin O1 superfamily. In terms of tissue distribution, expressed by the venom duct.

The protein resides in the secreted. In terms of biological role, delta-conotoxins bind to site 6 of voltage-gated sodium channels (Nav) and inhibit the inactivation process. Binding of this toxin is strongly calcium-dependent but not voltage-dependent. The binding site is most likely on the extracellular side of the sodium channel. Binds receptor sites on both mollusk and rat central nervous system, but despite its high affinity binding to rat sodium channel, it has no functional effect in vivo and in vitro on it. Also has no effect on Gambusia fish. Is important in mollusk for the paralysis of the prey. Upon injection of the peptide, a subordinate lobster assumes an exaggerated dominant posture (of a 'King-Kong' lobster!). This chain is Delta-conotoxin TxVIA, found in Conus textile (Cloth-of-gold cone).